The sequence spans 155 residues: SsrA-binding protein (155 aa).

Belongs to the SmpB family.

The protein localises to the cytoplasm. In terms of biological role, required for rescue of stalled ribosomes mediated by trans-translation. Binds to transfer-messenger RNA (tmRNA), required for stable association of tmRNA with ribosomes. tmRNA and SmpB together mimic tRNA shape, replacing the anticodon stem-loop with SmpB. tmRNA is encoded by the ssrA gene; the 2 termini fold to resemble tRNA(Ala) and it encodes a 'tag peptide', a short internal open reading frame. During trans-translation Ala-aminoacylated tmRNA acts like a tRNA, entering the A-site of stalled ribosomes, displacing the stalled mRNA. The ribosome then switches to translate the ORF on the tmRNA; the nascent peptide is terminated with the 'tag peptide' encoded by the tmRNA and targeted for degradation. The ribosome is freed to recommence translation, which seems to be the essential function of trans-translation. The polypeptide is SsrA-binding protein (Bacillus cereus (strain ATCC 10987 / NRS 248)).